Consider the following 236-residue polypeptide: 7-cyano-7-deazaguanine synthase (236 aa).

7-17 (CSGGLDSVSLA) provides a ligand contact to ATP. The Zn(2+) site is built by Cys-185, Cys-193, Cys-196, and Cys-199.

This sequence belongs to the QueC family. The cofactor is Zn(2+).

The enzyme catalyses 7-carboxy-7-deazaguanine + NH4(+) + ATP = 7-cyano-7-deazaguanine + ADP + phosphate + H2O + H(+). Its pathway is purine metabolism; 7-cyano-7-deazaguanine biosynthesis. Functionally, catalyzes the ATP-dependent conversion of 7-carboxy-7-deazaguanine (CDG) to 7-cyano-7-deazaguanine (preQ(0)). This Rhizobium rhizogenes (strain K84 / ATCC BAA-868) (Agrobacterium radiobacter) protein is 7-cyano-7-deazaguanine synthase.